The sequence spans 318 residues: Aspartate carbamoyltransferase catalytic subunit (318 aa).

2 residues coordinate carbamoyl phosphate: arginine 57 and threonine 58. Lysine 85 is a binding site for L-aspartate. The carbamoyl phosphate site is built by arginine 107, histidine 141, and glutamine 144. Arginine 174 and arginine 228 together coordinate L-aspartate. 2 residues coordinate carbamoyl phosphate: glycine 269 and proline 270.

It belongs to the aspartate/ornithine carbamoyltransferase superfamily. ATCase family. Heterododecamer (2C3:3R2) of six catalytic PyrB chains organized as two trimers (C3), and six regulatory PyrI chains organized as three dimers (R2).

It catalyses the reaction carbamoyl phosphate + L-aspartate = N-carbamoyl-L-aspartate + phosphate + H(+). Its pathway is pyrimidine metabolism; UMP biosynthesis via de novo pathway; (S)-dihydroorotate from bicarbonate: step 2/3. In terms of biological role, catalyzes the condensation of carbamoyl phosphate and aspartate to form carbamoyl aspartate and inorganic phosphate, the committed step in the de novo pyrimidine nucleotide biosynthesis pathway. The polypeptide is Aspartate carbamoyltransferase catalytic subunit (Mycolicibacterium smegmatis (strain ATCC 700084 / mc(2)155) (Mycobacterium smegmatis)).